The following is a 140-amino-acid chain: Large ribosomal subunit protein uL11 (140 aa).

Belongs to the universal ribosomal protein uL11 family. As to quaternary structure, part of the ribosomal stalk of the 50S ribosomal subunit. Interacts with L10 and the large rRNA to form the base of the stalk. L10 forms an elongated spine to which L12 dimers bind in a sequential fashion forming a multimeric L10(L12)X complex. Post-translationally, one or more lysine residues are methylated.

Functionally, forms part of the ribosomal stalk which helps the ribosome interact with GTP-bound translation factors. This chain is Large ribosomal subunit protein uL11, found in Geobacter metallireducens (strain ATCC 53774 / DSM 7210 / GS-15).